Here is a 341-residue protein sequence, read N- to C-terminus: HTH-type transcriptional repressor PurR (341 aa).

The 55-residue stretch at 2-56 (ATIKDVAKRAGVSTTTVSHVINKTRFVAEETKAAVRAAIKELHYSPSAVARSLKV) folds into the HTH lacI-type domain. A DNA-binding region (H-T-H motif) is located at residues 4 to 23 (IKDVAKRAGVSTTTVSHVIN). The DNA-binding element occupies 48–56 (SAVARSLKV). The hypoxanthine site is built by Tyr-73, Arg-190, Thr-192, Phe-221, and Asp-275.

In terms of assembly, homodimer.

It participates in purine metabolism; purine nucleotide biosynthesis [regulation]. Is the main repressor of the genes involved in the de novo synthesis of purine nucleotides, regulating purB, purC, purEK, purF, purHD, purL, purMN and guaBA expression. PurR is allosterically activated to bind its cognate DNA by binding the purine corepressors, hypoxanthine or guanine, thereby effecting transcription repression. The polypeptide is HTH-type transcriptional repressor PurR (Pectobacterium atrosepticum (strain SCRI 1043 / ATCC BAA-672) (Erwinia carotovora subsp. atroseptica)).